The following is an 82-amino-acid chain: Small ribosomal subunit protein uS17c (82 aa).

Belongs to the universal ribosomal protein uS17 family. As to quaternary structure, part of the 30S ribosomal subunit.

Its subcellular location is the plastid. The protein resides in the chloroplast. Its function is as follows. One of the primary rRNA binding proteins, it binds specifically to the 5'-end of 16S ribosomal RNA. The polypeptide is Small ribosomal subunit protein uS17c (rps17) (Emiliania huxleyi (Coccolithophore)).